A 557-amino-acid chain; its full sequence is Dihydroxy-acid dehydratase (557 aa).

Residue aspartate 78 participates in Mg(2+) binding. Residue cysteine 119 participates in [2Fe-2S] cluster binding. Positions 120 and 121 each coordinate Mg(2+). N6-carboxylysine is present on lysine 121. Cysteine 192 contacts [2Fe-2S] cluster. Glutamate 442 contacts Mg(2+). Residue serine 468 is the Proton acceptor of the active site.

Belongs to the IlvD/Edd family. As to quaternary structure, homodimer. The cofactor is [2Fe-2S] cluster. Mg(2+) is required as a cofactor.

The enzyme catalyses (2R)-2,3-dihydroxy-3-methylbutanoate = 3-methyl-2-oxobutanoate + H2O. The catalysed reaction is (2R,3R)-2,3-dihydroxy-3-methylpentanoate = (S)-3-methyl-2-oxopentanoate + H2O. Its pathway is amino-acid biosynthesis; L-isoleucine biosynthesis; L-isoleucine from 2-oxobutanoate: step 3/4. It participates in amino-acid biosynthesis; L-valine biosynthesis; L-valine from pyruvate: step 3/4. Its function is as follows. Functions in the biosynthesis of branched-chain amino acids. Catalyzes the dehydration of (2R,3R)-2,3-dihydroxy-3-methylpentanoate (2,3-dihydroxy-3-methylvalerate) into 2-oxo-3-methylpentanoate (2-oxo-3-methylvalerate) and of (2R)-2,3-dihydroxy-3-methylbutanoate (2,3-dihydroxyisovalerate) into 2-oxo-3-methylbutanoate (2-oxoisovalerate), the penultimate precursor to L-isoleucine and L-valine, respectively. In Bacillus thuringiensis subsp. konkukian (strain 97-27), this protein is Dihydroxy-acid dehydratase.